The primary structure comprises 94 residues: ESAT-6-like protein EsxI (94 aa).

It belongs to the WXG100 family. ESAT-6 subfamily.

The protein localises to the secreted. In Mycobacterium tuberculosis (strain ATCC 25618 / H37Rv), this protein is ESAT-6-like protein EsxI.